Consider the following 273-residue polypeptide: Cytochrome b-c1 complex subunit Rieske, mitochondrial (273 aa).

Residues 1–61 constitute a mitochondrion transit peptide; that stretch reads MLRVAGRRLS…PFFVASRGFS (61 aa). Residues 25–46 are disordered; sequence PLAGAGVPDRDDDSARGRSQPR. Topologically, residues 62-110 are mitochondrial matrix; sequence STETVVPRNQDAGLADLPATVAAVKNPNPKVVYDEYNHERYPPGDPSKR. Residues 111-133 traverse the membrane as a helical segment; sequence AFAYFVLSGGRFIYASLLRLLVL. The Mitochondrial intermembrane segment spans residues 134-273; it reads KFVLSMSASK…FLEENKLLVG (140 aa). The Rieske domain occupies 176-271; it reads RRRTEDDIKL…YSFLEENKLL (96 aa). The [2Fe-2S] cluster site is built by Cys216, His218, Cys235, and His238. The cysteines at positions 221 and 237 are disulfide-linked.

Belongs to the Rieske iron-sulfur protein family. As to quaternary structure, component of the ubiquinol-cytochrome c oxidoreductase (cytochrome b-c1 complex, complex III, CIII), a multisubunit enzyme composed of 3 respiratory subunits cytochrome b, cytochrome c1 and Rieske protein, 2 core protein subunits, and several low-molecular weight protein subunits. The complex exists as an obligatory dimer and forms supercomplexes (SCs) in the inner mitochondrial membrane with cytochrome c oxidase (complex IV, CIV). Requires [2Fe-2S] cluster as cofactor.

It is found in the mitochondrion inner membrane. The catalysed reaction is a quinol + 2 Fe(III)-[cytochrome c](out) = a quinone + 2 Fe(II)-[cytochrome c](out) + 2 H(+)(out). In terms of biological role, component of the ubiquinol-cytochrome c oxidoreductase, a multisubunit transmembrane complex that is part of the mitochondrial electron transport chain which drives oxidative phosphorylation. The respiratory chain contains 3 multisubunit complexes succinate dehydrogenase (complex II, CII), ubiquinol-cytochrome c oxidoreductase (cytochrome b-c1 complex, complex III, CIII) and cytochrome c oxidase (complex IV, CIV), that cooperate to transfer electrons derived from NADH and succinate to molecular oxygen, creating an electrochemical gradient over the inner membrane that drives transmembrane transport and the ATP synthase. The cytochrome b-c1 complex catalyzes electron transfer from ubiquinol to cytochrome c, linking this redox reaction to translocation of protons across the mitochondrial inner membrane, with protons being carried across the membrane as hydrogens on the quinol. In the process called Q cycle, 2 protons are consumed from the matrix, 4 protons are released into the intermembrane space and 2 electrons are passed to cytochrome c. The Rieske protein is a catalytic core subunit containing a [2Fe-2S] iron-sulfur cluster. It cycles between 2 conformational states during catalysis to transfer electrons from the quinol bound in the Q(0) site in cytochrome b to cytochrome c1. The polypeptide is Cytochrome b-c1 complex subunit Rieske, mitochondrial (Zea mays (Maize)).